A 340-amino-acid polypeptide reads, in one-letter code: Protein B17 (340 aa).

It belongs to the orthopoxvirus B17 protein family.

The sequence is that of Protein B17 from Vaccinia virus (strain Copenhagen) (VACV).